We begin with the raw amino-acid sequence, 271 residues long: Putative hydro-lyase jk0403 (271 aa).

The protein belongs to the D-glutamate cyclase family.

This chain is Putative hydro-lyase jk0403, found in Corynebacterium jeikeium (strain K411).